The chain runs to 1040 residues: Tudor domain-containing protein 5 (1040 aa).

HTH OST-type domains follow at residues 7–80, 122–197, and 291–365; these read IQDC…KAIP, VPPI…LKKS, and VDPE…FDAD. A Tudor domain is found at 533 to 592; sequence FIQPGHLCCVKISEDKWWYRVIIHRILGKKEVEVFYPDFGNIGTVQKSSLRFLKCCYTKL. A Phosphoserine modification is found at Ser809. 2 disordered regions span residues 857–891 and 912–975; these read DVKGGIHTPEGPIAQEKNTSTTRIQQQPDLQYPLD and AERS…AKDK. Composition is skewed to polar residues over residues 872–891 and 912–924; these read EKNTSTTRIQQQPDLQYPLD and AERSQSEPASIQT. Ser943 carries the phosphoserine modification. Over residues 946–956 the composition is skewed to polar residues; it reads NHSGSVESSPG. The segment covering 958–975 has biased composition (basic and acidic residues); that stretch reads LKKEDVSNSRAEATAKDK.

This sequence belongs to the TDRD5 family. As to expression, gonad-specific. Mainly expressed in testis. Present at low level in ovary (at protein level).

The protein resides in the cytoplasm. Its function is as follows. Required during spermiogenesis to participate in the repression transposable elements and prevent their mobilization, which is essential for the germline integrity. Probably acts via the piRNA metabolic process, which mediates the repression of transposable elements during meiosis by forming complexes composed of piRNAs and Piwi proteins and govern the methylation and subsequent repression of transposons. Required for chromatoid body (CB) assembly. The chain is Tudor domain-containing protein 5 (Tdrd5) from Mus musculus (Mouse).